We begin with the raw amino-acid sequence, 329 residues long: Putative HTH-type transcriptional regulatory protein APE_0778 (329 aa).

Positions 142–200 (LREKRLEKGLSLGHLAYMLKTSRKSIYEYERGVMSPSVEKAEKLVDILGEEILEPIDIL) constitute an HTH cro/C1-type domain. A DNA-binding region (H-T-H motif) is located at residues 153 to 172 (LGHLAYMLKTSRKSIYEYER).

The sequence is that of Putative HTH-type transcriptional regulatory protein APE_0778 from Aeropyrum pernix (strain ATCC 700893 / DSM 11879 / JCM 9820 / NBRC 100138 / K1).